We begin with the raw amino-acid sequence, 610 residues long: DNA mismatch repair protein MutL (610 aa).

Residues 351 to 406 are disordered; it reads GQRPQAPWSAETSPSRPYQPAPAFSERPQASFDGLSTPTARAEPQFSPDPVSPGLA.

It belongs to the DNA mismatch repair MutL/HexB family.

Its function is as follows. This protein is involved in the repair of mismatches in DNA. It is required for dam-dependent methyl-directed DNA mismatch repair. May act as a 'molecular matchmaker', a protein that promotes the formation of a stable complex between two or more DNA-binding proteins in an ATP-dependent manner without itself being part of a final effector complex. The sequence is that of DNA mismatch repair protein MutL from Rhizobium etli (strain ATCC 51251 / DSM 11541 / JCM 21823 / NBRC 15573 / CFN 42).